Here is a 164-residue protein sequence, read N- to C-terminus: Endoribonuclease YbeY (164 aa).

Zn(2+) is bound by residues His124, His128, and His134.

It belongs to the endoribonuclease YbeY family. Requires Zn(2+) as cofactor.

It is found in the cytoplasm. Functionally, single strand-specific metallo-endoribonuclease involved in late-stage 70S ribosome quality control and in maturation of the 3' terminus of the 16S rRNA. In Nitrosomonas europaea (strain ATCC 19718 / CIP 103999 / KCTC 2705 / NBRC 14298), this protein is Endoribonuclease YbeY.